Reading from the N-terminus, the 74-residue chain is Cytochrome c oxidase assembly factor 5 (74 aa).

The CHCH domain occupies Gln-27–Arg-65. A Cx10C motif motif is present at residues Cys-30 to Cys-41. Intrachain disulfides connect Cys-30-Cys-57 and Cys-41-Cys-47. Position 37 is a phosphoserine (Ser-37). Residues Cys-47 to Cys-57 carry the Cx9C motif motif.

Belongs to the PET191 family.

Functionally, involved in an early step of the mitochondrial complex IV assembly process. This Mus musculus (Mouse) protein is Cytochrome c oxidase assembly factor 5 (Coa5).